We begin with the raw amino-acid sequence, 105 residues long: Met repressor (105 aa).

This sequence belongs to the MetJ family. As to quaternary structure, homodimer.

It is found in the cytoplasm. Functionally, this regulatory protein, when combined with SAM (S-adenosylmethionine) represses the expression of the methionine regulon and of enzymes involved in SAM synthesis. The protein is Met repressor of Pasteurella multocida (strain Pm70).